Consider the following 519-residue polypeptide: Voltage-gated potassium channel regulatory subunit KCNG4 (519 aa).

Residues 1-25 (MPMPSRDGGLHPRHHHYGSHSPWSQ) are disordered. Over 1 to 218 (MPMPSRDGGL…EMVENPQSGL (218 aa)) the chain is Cytoplasmic. The chain crosses the membrane as a helical span at residues 219-240 (PGKVFACLSILFVATTAVSLCV). The Extracellular segment spans residues 241-261 (STMPDLRAEEDQGECSRKCYY). Residues 262-283 (IFIVETICVAWFSLEFCLRFVQ) form a helical membrane-spanning segment. Residues 284-294 (AQDKCQFFQGP) are Cytoplasmic-facing. The chain crosses the membrane as a helical span at residues 295–314 (LNIIDILAISPYYVSLAVSE). Residues 315 to 328 (EPPEDGERPSGSSY) lie on the Extracellular side of the membrane. A helical; Voltage-sensor membrane pass occupies residues 329 to 353 (LEKVGLVLRVLRALRILYVMRLARH). The Cytoplasmic segment spans residues 354–368 (SLGLQTLGLTVRRCT). The helical transmembrane segment at 369-390 (REFGLLLLFLAVAITLFSPLVY) threads the bilayer. At 391–405 (VAEKESGRVLEFTSI) the chain is on the extracellular side. The helical intramembrane region spans 406–417 (PASYWWAIISMT). Residues 418–423 (TVGYGD) carry the Selectivity filter motif. Residues 418-425 (TVGYGDMV) lie within the membrane without spanning it. Topologically, residues 426–432 (PRSVPGQ) are extracellular. Residues 433 to 461 (MVALSSILSGILIMAFPATSIFHTFSHSY) form a helical membrane-spanning segment. Residues 462–519 (LELKKEQEQLQARLRHLQNTGPASECELLDPHVASEHELMNDVNDLILEGPALPIMHM) lie on the Cytoplasmic side of the membrane.

The protein belongs to the potassium channel family. G (TC 1.A.1.2) subfamily. Kv6.4/KCNG4 sub-subfamily. As to quaternary structure, heterotetramer with KCNB1. Does not form homomultimer. In terms of tissue distribution, highly expressed in brain, and at lower levels in liver, small intestine and colon.

Its subcellular location is the cell membrane. Functionally, regulatory subunit of the voltage-gated potassium (Kv) channel which, when coassembled with KCNB1, modulates the kinetics parameters of the heterotetrameric channel namely the time course of activation, deactivation and inactivation and on the voltage-dependence of activation. Potassium channel subunit that does not form functional channels by itself. Reduces the deactivation rate. Modulates the threshold for activation by shifting by approximately 20 mV in hyperpolarizing direction. Markedly changes the inactivation by shifting the voltage dependence of inactivation by approximately 40 mV in hyperpolarizing direction. Acceleratee activation and enhances the time course of activation. This chain is Voltage-gated potassium channel regulatory subunit KCNG4, found in Homo sapiens (Human).